A 793-amino-acid polypeptide reads, in one-letter code: Phenylalanine--tRNA ligase beta subunit (793 aa).

A tRNA-binding domain is found at 39-148 (AGQFTHVIVA…DEAPIGMDLR (110 aa)). A B5 domain is found at 401-477 (PGTVSFLFDT…RLYGYDKLQA (77 aa)). Residues aspartate 455, aspartate 461, glutamate 464, and glutamate 465 each coordinate Mg(2+). The FDX-ACB domain occupies 698-792 (SKYPQIRRDL…LENEFSILLR (95 aa)).

The protein belongs to the phenylalanyl-tRNA synthetase beta subunit family. Type 1 subfamily. As to quaternary structure, tetramer of two alpha and two beta subunits. Mg(2+) is required as a cofactor.

The protein resides in the cytoplasm. It catalyses the reaction tRNA(Phe) + L-phenylalanine + ATP = L-phenylalanyl-tRNA(Phe) + AMP + diphosphate + H(+). The protein is Phenylalanine--tRNA ligase beta subunit of Legionella pneumophila (strain Paris).